We begin with the raw amino-acid sequence, 306 residues long: D-alanine--D-alanine ligase (306 aa).

An ATP-grasp domain is found at 104 to 303; sequence KMLWKAFGLP…FEQLVVKILE (200 aa). 134–189 is a binding site for ATP; the sequence is VAKLGLPLMVKPSLEGSSVGLTKVKAVEELKSAVEYALKFDNTILIEEWLAGDELT. Residues aspartate 257, glutamate 270, and asparagine 272 each coordinate Mg(2+).

Belongs to the D-alanine--D-alanine ligase family. Mg(2+) is required as a cofactor. It depends on Mn(2+) as a cofactor.

The protein resides in the cytoplasm. The catalysed reaction is 2 D-alanine + ATP = D-alanyl-D-alanine + ADP + phosphate + H(+). It participates in cell wall biogenesis; peptidoglycan biosynthesis. Cell wall formation. The sequence is that of D-alanine--D-alanine ligase from Haemophilus influenzae (strain 86-028NP).